We begin with the raw amino-acid sequence, 320 residues long: Cytochrome f (320 aa).

The signal sequence occupies residues 1–35; it reads MQNRNTFSWVKEQMTRFISVSIMIYVITRTSISNA. Residues Tyr-36, Cys-56, Cys-59, and His-60 each contribute to the heme site. Residues 286–306 traverse the membrane as a helical segment; sequence VQGLLFFLASVILAQIFLVLK.

This sequence belongs to the cytochrome f family. In terms of assembly, the 4 large subunits of the cytochrome b6-f complex are cytochrome b6, subunit IV (17 kDa polypeptide, petD), cytochrome f and the Rieske protein, while the 4 small subunits are PetG, PetL, PetM and PetN. The complex functions as a dimer. It depends on heme as a cofactor.

The protein localises to the plastid. It localises to the chloroplast thylakoid membrane. In terms of biological role, component of the cytochrome b6-f complex, which mediates electron transfer between photosystem II (PSII) and photosystem I (PSI), cyclic electron flow around PSI, and state transitions. This Liriodendron tulipifera (Tuliptree) protein is Cytochrome f.